We begin with the raw amino-acid sequence, 68 residues long: Disintegrin EMS11A (68 aa).

The 65-residue stretch at 1 to 65 (NSAHPCCDPV…DCPRNRYKGK (65 aa)) folds into the Disintegrin domain. Cystine bridges form between Cys6-Cys29, Cys20-Cys26, Cys25-Cys50, and Cys38-Cys57. The Cell attachment site; atypical (MLD) signature appears at 42–44 (MLD).

It belongs to the disintegrin family. Dimeric disintegrin subfamily. As to quaternary structure, heterodimer; disulfide-linked. Expressed by the venom gland.

Its subcellular location is the secreted. In terms of biological role, poor inhibitor of platelet aggregation. The disintegrin inhibits the adhesion of both the alpha-4/beta-1 (ITGA4/ITGB1) and the alpha-5/beta-1 (ITGA5/ITGB1) integrins to VCAM-1 and fibronectin respectively with almost the same degree of specificity. Inhibition on alpha-IIb/beta-3 (ITGA2B/ITGB3) is low. This chain is Disintegrin EMS11A, found in Echis multisquamatus (Central Asian sand viper).